Here is a 1576-residue protein sequence, read N- to C-terminus: DNA-directed RNA polymerase subunit beta' (1576 aa).

Cys-64, Cys-66, Cys-79, and Cys-82 together coordinate Zn(2+). Mg(2+) is bound by residues Asp-590, Asp-592, and Asp-594. The Zn(2+) site is built by Cys-928, Cys-1002, Cys-1009, and Cys-1012.

Belongs to the RNA polymerase beta' chain family. As to quaternary structure, the RNAP catalytic core consists of 2 alpha, 1 beta, 1 beta' and 1 omega subunit. When a sigma factor is associated with the core the holoenzyme is formed, which can initiate transcription. Mg(2+) serves as cofactor. Requires Zn(2+) as cofactor.

The enzyme catalyses RNA(n) + a ribonucleoside 5'-triphosphate = RNA(n+1) + diphosphate. In terms of biological role, DNA-dependent RNA polymerase catalyzes the transcription of DNA into RNA using the four ribonucleoside triphosphates as substrates. This chain is DNA-directed RNA polymerase subunit beta', found in Aquifex pyrophilus.